A 428-amino-acid polypeptide reads, in one-letter code: MLDPKFLRTELDATAERLASRGFALDTAHLSQLEETRKSLQVETEELQASRNAISKSIGQAKSRGEDVSAIMAQVGDLGSKLDAKKAELAELLHAINLIAMSTPNLPDESVPCGKDETENLEVRRWGTPRSFDFPVKDHLDLGEALGGLDFKSAVKITGSRFIVMKGQLARLNRALGQFMLDLHTQEHGYTETYVPLLVNEDSLLGTGQLPKFGEDLFHTKPATEEGQGLSLIPTAEVPLTNLVRDTIVEVSDLPLKFTAQTSCFRSEAGSYGRDTRGLIRQHQFEKVELVQIVKPEDSMQALEELTLHAEKVLQLLGLPYRTMLLCTGDMGFGASKTYDLEVWLPAQNTYREISSCSNMKDFQARRMQARYRNPEDNKPALLHTLNGSGLAVGRTLVAILENYQNADGSITVPDVLHKYMGGTTLIG.

An L-serine-binding site is contributed by 235–237 (TAE). ATP is bound at residue 266–268 (RSE). An L-serine-binding site is contributed by glutamate 289. Position 353–356 (353–356 (EISS)) interacts with ATP. Position 389 (serine 389) interacts with L-serine.

The protein belongs to the class-II aminoacyl-tRNA synthetase family. Type-1 seryl-tRNA synthetase subfamily. In terms of assembly, homodimer. The tRNA molecule binds across the dimer.

The protein resides in the cytoplasm. It catalyses the reaction tRNA(Ser) + L-serine + ATP = L-seryl-tRNA(Ser) + AMP + diphosphate + H(+). The enzyme catalyses tRNA(Sec) + L-serine + ATP = L-seryl-tRNA(Sec) + AMP + diphosphate + H(+). Its pathway is aminoacyl-tRNA biosynthesis; selenocysteinyl-tRNA(Sec) biosynthesis; L-seryl-tRNA(Sec) from L-serine and tRNA(Sec): step 1/1. Its function is as follows. Catalyzes the attachment of serine to tRNA(Ser). Is also able to aminoacylate tRNA(Sec) with serine, to form the misacylated tRNA L-seryl-tRNA(Sec), which will be further converted into selenocysteinyl-tRNA(Sec). The polypeptide is Serine--tRNA ligase (Shewanella denitrificans (strain OS217 / ATCC BAA-1090 / DSM 15013)).